The following is a 259-amino-acid chain: UPF0246 protein Aave_1172 (259 aa).

The protein belongs to the UPF0246 family.

The protein is UPF0246 protein Aave_1172 of Paracidovorax citrulli (strain AAC00-1) (Acidovorax citrulli).